We begin with the raw amino-acid sequence, 140 residues long: Putative pre-16S rRNA nuclease (140 aa).

The protein belongs to the YqgF nuclease family.

The protein resides in the cytoplasm. Functionally, could be a nuclease involved in processing of the 5'-end of pre-16S rRNA. In Yersinia enterocolitica serotype O:8 / biotype 1B (strain NCTC 13174 / 8081), this protein is Putative pre-16S rRNA nuclease.